The following is an 81-amino-acid chain: Sulfur carrier protein TusA (81 aa).

Cys19 (cysteine persulfide intermediate) is an active-site residue.

Belongs to the sulfur carrier protein TusA family. As to quaternary structure, interacts with IscS.

It localises to the cytoplasm. It participates in tRNA modification. In terms of biological role, sulfur carrier protein involved in sulfur trafficking in the cell. Part of a sulfur-relay system required for 2-thiolation during synthesis of 2-thiouridine of the modified wobble base 5-methylaminomethyl-2-thiouridine (mnm(5)s(2)U) in tRNA. Interacts with IscS and stimulates its cysteine desulfurase activity. Accepts an activated sulfur from IscS, which is then transferred to TusD, and thus determines the direction of sulfur flow from IscS to 2-thiouridine formation. Also appears to be involved in sulfur transfer for the biosynthesis of molybdopterin. This chain is Sulfur carrier protein TusA, found in Serratia proteamaculans (strain 568).